Consider the following 962-residue polypeptide: Glycine dehydrogenase (decarboxylating) (962 aa).

Position 709 is an N6-(pyridoxal phosphate)lysine (K709).

The protein belongs to the GcvP family. As to quaternary structure, the glycine cleavage system is composed of four proteins: P, T, L and H. Pyridoxal 5'-phosphate is required as a cofactor.

It catalyses the reaction N(6)-[(R)-lipoyl]-L-lysyl-[glycine-cleavage complex H protein] + glycine + H(+) = N(6)-[(R)-S(8)-aminomethyldihydrolipoyl]-L-lysyl-[glycine-cleavage complex H protein] + CO2. In terms of biological role, the glycine cleavage system catalyzes the degradation of glycine. The P protein binds the alpha-amino group of glycine through its pyridoxal phosphate cofactor; CO(2) is released and the remaining methylamine moiety is then transferred to the lipoamide cofactor of the H protein. The sequence is that of Glycine dehydrogenase (decarboxylating) from Shewanella sp. (strain ANA-3).